A 525-amino-acid chain; its full sequence is 2-isopropylmalate synthase (525 aa).

One can recognise a Pyruvate carboxyltransferase domain in the interval Val5–Tyr267. Residues Asp14, His202, His204, and Asn238 each coordinate Mn(2+). The segment at Arg392–Val525 is regulatory domain.

It belongs to the alpha-IPM synthase/homocitrate synthase family. LeuA type 1 subfamily. Homodimer. Mn(2+) serves as cofactor.

The protein resides in the cytoplasm. It carries out the reaction 3-methyl-2-oxobutanoate + acetyl-CoA + H2O = (2S)-2-isopropylmalate + CoA + H(+). The protein operates within amino-acid biosynthesis; L-leucine biosynthesis; L-leucine from 3-methyl-2-oxobutanoate: step 1/4. Its function is as follows. Catalyzes the condensation of the acetyl group of acetyl-CoA with 3-methyl-2-oxobutanoate (2-ketoisovalerate) to form 3-carboxy-3-hydroxy-4-methylpentanoate (2-isopropylmalate). This Sodalis glossinidius (strain morsitans) protein is 2-isopropylmalate synthase.